Reading from the N-terminus, the 308-residue chain is Limonin dehydrogenase (308 aa).

This sequence belongs to the aldehyde dehydrogenase family.

It is found in the periplasm. With respect to regulation, completely inhibited by HgCl(2), CoCl(2) and CaCl(2). Functionally, catalyzes the NAD(+)-dependent conversion of limonin. The protein is Limonin dehydrogenase of Pseudomonas putida (Arthrobacter siderocapsulatus).